Consider the following 782-residue polypeptide: Acetazolamide conferring resistance protein zam (782 aa).

The 310-residue stretch at 270-579 (EVALSLESQA…QRLLKLVLTE (310 aa)) folds into the RNB domain. The S1 motif domain maps to 655-736 (GEIFRGLITG…YRQQIDLGAV (82 aa)). The interval 737-782 (NNAPKDSANMDFDDDDEDGDEREEQDTMDWDAMEDGDDDEGGAVIF) is disordered. Acidic residues predominate over residues 747-782 (DFDDDDEDGDEREEQDTMDWDAMEDGDDDEGGAVIF).

It belongs to the RNR ribonuclease family.

Not known; control resistance to the carbonic anhydrase inhibitor acetazolamide. The chain is Acetazolamide conferring resistance protein zam (zam) from Synechocystis sp. (strain ATCC 27184 / PCC 6803 / Kazusa).